Consider the following 465-residue polypeptide: Pancreatic triacylglycerol lipase (465 aa).

A signal peptide spans 1–16 (MLMLWTFAVLLGAVAG). Disulfide bonds link cysteine 20–cysteine 26 and cysteine 107–cysteine 118. The active-site Nucleophile is the serine 169. The active-site Charge relay system is the aspartate 193. Glutamate 204, arginine 207, aspartate 209, and aspartate 212 together coordinate Ca(2+). The cysteines at positions 254 and 278 are disulfide-linked. Histidine 280 serves as the catalytic Charge relay system. 3 disulfide bridges follow: cysteine 302/cysteine 313, cysteine 316/cysteine 321, and cysteine 449/cysteine 465. A PLAT domain is found at 355–465 (WRYQVTVTLS…EDVLLTLSPC (111 aa)).

The protein belongs to the AB hydrolase superfamily. Lipase family. In terms of assembly, forms a 1:1 stoichiometric complex with (pro)colipase/CLPS. In terms of tissue distribution, pancreas.

It localises to the secreted. The catalysed reaction is a triacylglycerol + H2O = a diacylglycerol + a fatty acid + H(+). It carries out the reaction 1,2,3-tri-(9Z-octadecenoyl)-glycerol + H2O = di-(9Z)-octadecenoylglycerol + (9Z)-octadecenoate + H(+). It catalyses the reaction 1,2,3-tributanoylglycerol + H2O = dibutanoylglycerol + butanoate + H(+). The enzyme catalyses all-trans-retinyl hexadecanoate + H2O = all-trans-retinol + hexadecanoate + H(+). The catalysed reaction is 1,2-di-(9Z-octadecenoyl)-glycerol + H2O = (9Z-octadecenoyl)-glycerol + (9Z)-octadecenoate + H(+). Its activity is regulated as follows. Inhibited by bile salts, is reactivated by (pro)colipase/CLPS. In terms of biological role, plays an important role in fat metabolism. It preferentially splits the esters of long-chain fatty acids at positions 1 and 3, producing mainly 2-monoacylglycerol and free fatty acids, and shows considerably higher activity against insoluble emulsified substrates than against soluble ones. The polypeptide is Pancreatic triacylglycerol lipase (Mus musculus (Mouse)).